The following is a 410-amino-acid chain: Probable inactive allantoicase (410 aa).

This sequence belongs to the allantoicase family.

In terms of biological role, the function of this enzyme is unclear as allantoicase activity is not known to exist in mammals. This is Probable inactive allantoicase (ALLC) from Macaca fascicularis (Crab-eating macaque).